Consider the following 138-residue polypeptide: Putative nickel-responsive regulator (138 aa).

The Ni(2+) site is built by histidine 80, histidine 91, histidine 93, and cysteine 99.

It belongs to the transcriptional regulatory CopG/NikR family. Ni(2+) serves as cofactor.

Transcriptional regulator. The polypeptide is Putative nickel-responsive regulator (Campylobacter hominis (strain ATCC BAA-381 / DSM 21671 / CCUG 45161 / LMG 19568 / NCTC 13146 / CH001A)).